Here is a 385-residue protein sequence, read N- to C-terminus: Methylthioribose-1-phosphate isomerase (385 aa).

Asp-255 functions as the Proton donor in the catalytic mechanism.

It belongs to the eIF-2B alpha/beta/delta subunits family. MtnA subfamily.

Its subcellular location is the cytoplasm. The protein resides in the nucleus. The catalysed reaction is 5-(methylsulfanyl)-alpha-D-ribose 1-phosphate = 5-(methylsulfanyl)-D-ribulose 1-phosphate. It functions in the pathway amino-acid biosynthesis; L-methionine biosynthesis via salvage pathway; L-methionine from S-methyl-5-thio-alpha-D-ribose 1-phosphate: step 1/6. Its function is as follows. Catalyzes the interconversion of methylthioribose-1-phosphate (MTR-1-P) into methylthioribulose-1-phosphate (MTRu-1-P). In Aspergillus clavatus (strain ATCC 1007 / CBS 513.65 / DSM 816 / NCTC 3887 / NRRL 1 / QM 1276 / 107), this protein is Methylthioribose-1-phosphate isomerase (mri1).